Consider the following 71-residue polypeptide: DNA gyrase inhibitor YacG (71 aa).

Zn(2+)-binding residues include cysteine 7, cysteine 10, cysteine 26, and cysteine 30.

Belongs to the DNA gyrase inhibitor YacG family. As to quaternary structure, interacts with GyrB. Zn(2+) serves as cofactor.

Its function is as follows. Inhibits all the catalytic activities of DNA gyrase by preventing its interaction with DNA. Acts by binding directly to the C-terminal domain of GyrB, which probably disrupts DNA binding by the gyrase. The protein is DNA gyrase inhibitor YacG of Shewanella amazonensis (strain ATCC BAA-1098 / SB2B).